Reading from the N-terminus, the 202-residue chain is Mitochondrial import receptor subunit TOM20-3 (202 aa).

Met-1 carries the N-acetylmethionine modification. At 1-174 (MDTETEFDRI…NKKSSDAKYD (174 aa)) the chain is on the cytoplasmic side. TPR repeat units follow at residues 38–74 (GGVLLELSQFHSISDAKQMIQEAITKFEEALLIDPKK) and 86–119 (TSFAFLTPDETEAKHNFDLATQFFQQAVDEQPDN). Residues 146–166 (SQPMGRVEAPAPPSSKAVKNK) form a disordered region. The helical transmembrane segment at 175–192 (AMGWVILAIGVVAWISFA) threads the bilayer. The Mitochondrial intermembrane segment spans residues 193–202 (KANVPVSPPR).

Belongs to the Tom20 family. Forms part of the preprotein translocase complex of the outer mitochondrial membrane (TOM complex) which consists of at least 6 different proteins (TOM5, TOM6, TOM7, TOM20, TOM22/TOM9 and TOM40). Component of a mitochondrial large protein complex that contains, at least, MIC60, DGS1, TOM40, TOM20 proteins, and petC/RISP. Post-translationally, the N-terminus is blocked. In terms of tissue distribution, expressed in roots, flowers, young cotyledons and leaves.

Its subcellular location is the mitochondrion outer membrane. Its function is as follows. Central component of the receptor complex responsible for the recognition and translocation of cytosolically synthesized mitochondrial preproteins. Together with TOM22 functions as the transit peptide receptor at the surface of the mitochondrion outer membrane and facilitates the movement of preproteins into the translocation pore. The protein is Mitochondrial import receptor subunit TOM20-3 of Arabidopsis thaliana (Mouse-ear cress).